The following is a 456-amino-acid chain: ATP synthase subunit beta 1 (456 aa).

152–159 (GGAGVGKS) contributes to the ATP binding site.

Belongs to the ATPase alpha/beta chains family. As to quaternary structure, F-type ATPases have 2 components, CF(1) - the catalytic core - and CF(0) - the membrane proton channel. CF(1) has five subunits: alpha(3), beta(3), gamma(1), delta(1), epsilon(1). CF(0) has three main subunits: a(1), b(2) and c(9-12). The alpha and beta chains form an alternating ring which encloses part of the gamma chain. CF(1) is attached to CF(0) by a central stalk formed by the gamma and epsilon chains, while a peripheral stalk is formed by the delta and b chains.

The protein resides in the cell membrane. It catalyses the reaction ATP + H2O + 4 H(+)(in) = ADP + phosphate + 5 H(+)(out). Its function is as follows. Produces ATP from ADP in the presence of a proton gradient across the membrane. The catalytic sites are hosted primarily by the beta subunits. The chain is ATP synthase subunit beta 1 from Listeria monocytogenes serotype 4b (strain F2365).